A 447-amino-acid chain; its full sequence is Signal recognition particle 54 kDa protein (447 aa).

GTP is bound by residues 103–110 (GVQGSGKT), 185–189 (DTAGR), and 245–248 (TKMD).

It belongs to the GTP-binding SRP family. SRP54 subfamily. As to quaternary structure, part of the signal recognition particle protein translocation system, which is composed of SRP and FtsY. Archaeal SRP consists of a 7S RNA molecule of 300 nucleotides and two protein subunits: SRP54 and SRP19.

It is found in the cytoplasm. The enzyme catalyses GTP + H2O = GDP + phosphate + H(+). Functionally, involved in targeting and insertion of nascent membrane proteins into the cytoplasmic membrane. Binds to the hydrophobic signal sequence of the ribosome-nascent chain (RNC) as it emerges from the ribosomes. The SRP-RNC complex is then targeted to the cytoplasmic membrane where it interacts with the SRP receptor FtsY. The chain is Signal recognition particle 54 kDa protein from Saccharolobus islandicus (strain L.S.2.15 / Lassen #1) (Sulfolobus islandicus).